The chain runs to 388 residues: UDP-N-acetylglucosamine--N-acetylmuramyl-(pentapeptide) pyrophosphoryl-undecaprenol N-acetylglucosamine transferase (388 aa).

Residues 42–44, Asn-159, Arg-195, Ser-223, Ile-277, and Gln-322 contribute to the UDP-N-acetyl-alpha-D-glucosamine site; that span reads TGG.

The protein belongs to the glycosyltransferase 28 family. MurG subfamily.

Its subcellular location is the cell inner membrane. It carries out the reaction di-trans,octa-cis-undecaprenyl diphospho-N-acetyl-alpha-D-muramoyl-L-alanyl-D-glutamyl-meso-2,6-diaminopimeloyl-D-alanyl-D-alanine + UDP-N-acetyl-alpha-D-glucosamine = di-trans,octa-cis-undecaprenyl diphospho-[N-acetyl-alpha-D-glucosaminyl-(1-&gt;4)]-N-acetyl-alpha-D-muramoyl-L-alanyl-D-glutamyl-meso-2,6-diaminopimeloyl-D-alanyl-D-alanine + UDP + H(+). Its pathway is cell wall biogenesis; peptidoglycan biosynthesis. Its function is as follows. Cell wall formation. Catalyzes the transfer of a GlcNAc subunit on undecaprenyl-pyrophosphoryl-MurNAc-pentapeptide (lipid intermediate I) to form undecaprenyl-pyrophosphoryl-MurNAc-(pentapeptide)GlcNAc (lipid intermediate II). The chain is UDP-N-acetylglucosamine--N-acetylmuramyl-(pentapeptide) pyrophosphoryl-undecaprenol N-acetylglucosamine transferase from Albidiferax ferrireducens (strain ATCC BAA-621 / DSM 15236 / T118) (Rhodoferax ferrireducens).